We begin with the raw amino-acid sequence, 173 residues long: Tumor necrosis factor ligand superfamily member 18 (173 aa).

Residues 1-20 (MEEMPLRESSPQRAERCKKS) lie on the Cytoplasmic side of the membrane. Residues 21 to 41 (WLLCIVALLLMLLCSLGTLIY) traverse the membrane as a helical; Signal-anchor for type II membrane protein segment. In terms of domain architecture, THD spans 40–166 (IYTSLKPTAI…TNTYWGIILM (127 aa)). The Extracellular portion of the chain corresponds to 42 to 173 (TSLKPTAIES…ILMPDLPFIS (132 aa)). Cysteines 52 and 72 form a disulfide. The N-linked (GlcNAc...) asparagine glycan is linked to N74.

It belongs to the tumor necrosis factor family. Homotrimer. Homodimer. Post-translationally, N-glycosylated. Detected in immature and mature dendritic cells and in macrophages (at protein level). Detected in spleen, lung, heart, thymus, monocytes, macrophages, B-cells and dendritic cells.

It localises to the cell membrane. Its function is as follows. Cytokine that binds to TNFRSF18/AITR/GITR. Regulates T-cell responses. Can function as costimulator and lower the threshold for T-cell activation and T-cell proliferation. Important for interactions between activated T-lymphocytes and endothelial cells. Mediates activation of NF-kappa-B. Triggers increased phosphorylation of STAT1 and up-regulates expression of VCAM1 and ICAM1. Promotes leukocyte adhesion to endothelial cells. Regulates migration of monocytes from the splenic reservoir to sites of inflammation. The polypeptide is Tumor necrosis factor ligand superfamily member 18 (Tnfsf18) (Mus musculus (Mouse)).